We begin with the raw amino-acid sequence, 312 residues long: MLQYQIDRIEHQVADDRAQTGVFLIGPLERGQATTLGNSLRRVLMGGLEGSAITAVRIAGVNHEYATIPGVREDVLDILLNCKQLSVNSRTSELEIGRLVVTGPAQVKAKDLQFSSQVQVVDGDRQIATVHEGHSLELEVHVERGIGYRPVDRHNEDVSAIDLLQIDAVFMPVRRVNFTIDETAVAEGGSTRERLRIEIVTDGSTTPDDALAESANQLIELFQPLATVTMVEEPGLEPEPSAESQIPLEELNLSVRAYNCLKRAQVNSVSDLMGFSYEDLLEIKNFGSKSADEVIEALERIGISIPQSRTSA.

The segment at 1–229 (MLQYQIDRIE…ELFQPLATVT (229 aa)) is alpha N-terminal domain (alpha-NTD). The segment at 245–312 (QIPLEELNLS…ISIPQSRTSA (68 aa)) is alpha C-terminal domain (alpha-CTD).

The protein belongs to the RNA polymerase alpha chain family. As to quaternary structure, in cyanobacteria the RNAP catalytic core is composed of 2 alpha, 1 beta, 1 beta', 1 gamma and 1 omega subunit. When a sigma factor is associated with the core the holoenzyme is formed, which can initiate transcription.

It carries out the reaction RNA(n) + a ribonucleoside 5'-triphosphate = RNA(n+1) + diphosphate. Its function is as follows. DNA-dependent RNA polymerase catalyzes the transcription of DNA into RNA using the four ribonucleoside triphosphates as substrates. This Prochlorococcus marinus (strain MIT 9313) protein is DNA-directed RNA polymerase subunit alpha.